The chain runs to 696 residues: Gametogenetin-binding protein 2 (696 aa).

A phosphoserine mark is found at Ser-360 and Ser-602.

As to quaternary structure, interacts with isoform 1 of GGN. Testis-specific.

Its subcellular location is the cytoplasmic vesicle. Its function is as follows. May be involved in spermatogenesis. This chain is Gametogenetin-binding protein 2 (Ggnbp2), found in Mus musculus (Mouse).